The primary structure comprises 60 residues: uncharacterized protein (60 aa).

This is an uncharacterized protein from Schizosaccharomyces pombe (strain 972 / ATCC 24843) (Fission yeast).